The primary structure comprises 210 residues: UPF0301 protein M446_6268 (210 aa).

Belongs to the UPF0301 (AlgH) family.

The polypeptide is UPF0301 protein M446_6268 (Methylobacterium sp. (strain 4-46)).